A 280-amino-acid polypeptide reads, in one-letter code: Dexamethasone-induced Ras-related protein 1 (280 aa).

Cysteine 11 is subject to S-nitrosocysteine. 31–38 (GSSKVGKT) contributes to the GTP binding site. The short motif at 53-61 (YTPTIEDFH) is the Effector region element. GTP contacts are provided by residues 78-82 (DTSGN) and 145-148 (NKGD). Cysteine methyl ester is present on cysteine 277. Cysteine 277 carries the S-farnesyl cysteine lipid modification. The propeptide at 278-280 (VIS) is removed in mature form.

It belongs to the small GTPase superfamily. RasD family. Forms a ternary complex with CAPON and NOS1. Component of a complex, at least composed of APBB1, RASD1/DEXRAS1 and APP. Interacts with APBB1/FE65. Forms. S-nitrosylation stimulates guanine-nucleotide exchange activity. Prominently found in brain at both mRNA and protein levels. Moderate expression in testis and lung. Slightly expressed in heart, spleen, skeletal muscle, liver and kidney.

The protein localises to the cell membrane. It localises to the cytoplasm. It is found in the perinuclear region. The protein resides in the nucleus. Functionally, small GTPase. Negatively regulates the transcription regulation activity of the APBB1/FE65-APP complex via its interaction with APBB1/FE65. The polypeptide is Dexamethasone-induced Ras-related protein 1 (Rasd1) (Rattus norvegicus (Rat)).